Consider the following 473-residue polypeptide: Glutamate--tRNA ligase 2 (473 aa).

The 'HIGH' region motif lies at P11–G21. The segment covering K113–S133 has biased composition (basic and acidic residues). The interval K113–P136 is disordered. Residues K240 to R244 carry the 'KMSKS' region motif. K243 is an ATP binding site.

This sequence belongs to the class-I aminoacyl-tRNA synthetase family. Glutamate--tRNA ligase type 1 subfamily. In terms of assembly, monomer.

It is found in the cytoplasm. The catalysed reaction is tRNA(Glu) + L-glutamate + ATP = L-glutamyl-tRNA(Glu) + AMP + diphosphate. Catalyzes the attachment of glutamate to tRNA(Glu) in a two-step reaction: glutamate is first activated by ATP to form Glu-AMP and then transferred to the acceptor end of tRNA(Glu). The sequence is that of Glutamate--tRNA ligase 2 from Brucella canis (strain ATCC 23365 / NCTC 10854 / RM-666).